The following is a 117-amino-acid chain: Neurotoxic enhancer CSTX-13 (117 aa).

The signal sequence occupies residues 1–20 (MKVLVIFAVLSLVIFSNCSA). The propeptide occupies 21–47 (ETDEDFFGEESFEADDIIPFIAKEQVR). 4 disulfide bridges follow: Cys50–Cys65, Cys57–Cys74, Cys64–Cys95, and Cys76–Cys93. A propeptide spanning residues 82–87 (RSETAR) is cleaved from the precursor. Thr116 carries the threonine amide modification.

Belongs to the neurotoxin 19 (CSTX) family. 12 subfamily. As to quaternary structure, heterodimer of A and B chains; disulfide-linked. Interacts with CSTX-1 (AC P81694) (Kd=430 nM), and with CSTX-9 (AC P58604) (Kd=370 nM). As to expression, expressed by the venom gland.

The protein localises to the secreted. The protein resides in the target cell membrane. Functionally, synergistic toxin that induces or increases a cytolytic effect when combined with CSTX-1 (AC P81694) or CSTX-9 (AC P58604). When alone, has a weak insecticidal activity, with an unknown molecular target. In Cupiennius salei (American wandering spider), this protein is Neurotoxic enhancer CSTX-13.